The primary structure comprises 233 residues: Large ribosomal subunit protein uL1 (233 aa).

It belongs to the universal ribosomal protein uL1 family. In terms of assembly, part of the 50S ribosomal subunit.

Binds directly to 23S rRNA. The L1 stalk is quite mobile in the ribosome, and is involved in E site tRNA release. Its function is as follows. Protein L1 is also a translational repressor protein, it controls the translation of the L11 operon by binding to its mRNA. This Vibrio vulnificus (strain CMCP6) protein is Large ribosomal subunit protein uL1.